The following is a 396-amino-acid chain: Tryptophan synthase beta chain (396 aa).

The residue at position 90 (Lys90) is an N6-(pyridoxal phosphate)lysine.

The protein belongs to the TrpB family. As to quaternary structure, tetramer of two alpha and two beta chains. The cofactor is pyridoxal 5'-phosphate.

The catalysed reaction is (1S,2R)-1-C-(indol-3-yl)glycerol 3-phosphate + L-serine = D-glyceraldehyde 3-phosphate + L-tryptophan + H2O. It functions in the pathway amino-acid biosynthesis; L-tryptophan biosynthesis; L-tryptophan from chorismate: step 5/5. The beta subunit is responsible for the synthesis of L-tryptophan from indole and L-serine. This Clostridium kluyveri (strain NBRC 12016) protein is Tryptophan synthase beta chain.